Consider the following 203-residue polypeptide: Peptidyl-tRNA hydrolase (203 aa).

Y18 contributes to the tRNA binding site. H23 serves as the catalytic Proton acceptor. Residues Y69, N71, and N117 each contribute to the tRNA site.

The protein belongs to the PTH family. In terms of assembly, monomer.

The protein resides in the cytoplasm. It catalyses the reaction an N-acyl-L-alpha-aminoacyl-tRNA + H2O = an N-acyl-L-amino acid + a tRNA + H(+). Functionally, hydrolyzes ribosome-free peptidyl-tRNAs (with 1 or more amino acids incorporated), which drop off the ribosome during protein synthesis, or as a result of ribosome stalling. Catalyzes the release of premature peptidyl moieties from peptidyl-tRNA molecules trapped in stalled 50S ribosomal subunits, and thus maintains levels of free tRNAs and 50S ribosomes. This chain is Peptidyl-tRNA hydrolase, found in Parasynechococcus marenigrum (strain WH8102).